The chain runs to 612 residues: MNKLSCLYCRRRKIKCDKNRPCHNCFVAKRECIIAGDNRKKRHTKTYVEALESQLANMESTLAKIKVAPVEKIPSLLAGISFKDHLSASLPNKTSYEQADTNATSKSLVDLPVSLEVRGRNTVTFYGPTSIFGTSFTSSPRPPPSASIEDTYPIIHCLQLFFKWQYAQFLFIHRESFLFEYFHRSNDNMYCSEHLIYALCAIGCRSSEDSLLVNQADAFYKMAWDALESYGLENSHITSAQCLLCLGFYKIAMGNTSHGWLLCGMAFRMGQDLGFHLDPRDWHINNVPVVSEEQAALRSRIYWGCYVADVFVSFILGRPTTLSKSDTSVPTSDDLPDFSGIEDFMLERGGAHASSITISQLLNLIVSLSNITDAILLNVFAPYSTKYGIDLRLQNVGKYNLELMKWHFELPPNLSWKKTELRDFGQSPELCFLCLYFFLIRLCLNRPFLSKKGLYVNDMTPRNICIDSIEDVKVLIRAYRENLGLHHTPLIIVYACIVSCSTVFMLFDGATPSEIVALEQDIKFFLHVLTKISKNWDLASKSINLIQKKSTMYDTNARANDTDVDFSNDKQNTHDFQISHDENLIQLFNDESNFFNLNDLGDFQSIFGGPQF.

The zn(2)-C6 fungal-type DNA-binding region spans 6–32; it reads CLYCRRRKIKCDKNRPCHNCFVAKREC.

It localises to the cytoplasm. Its subcellular location is the nucleus. This is an uncharacterized protein from Schizosaccharomyces pombe (strain 972 / ATCC 24843) (Fission yeast).